The chain runs to 670 residues: Extracellular matrix protein 2 (670 aa).

The first 19 residues, 1 to 19 (MKLAVLFCFILLIVLQTDC), serve as a signal peptide directing secretion. One can recognise a VWFC domain in the interval 96–153 (GYCFVKGMIMYNKAVWSPEPCTTCLCSNGRVLCDETECHPKACPYTIKPEGECCPICS). Positions 185–270 (SEEDEEIAEG…EEDAIRGDVF (86 aa)) are disordered. Over residues 192 to 227 (AEGHKEHKKETSVPTKIHGDGERTERKLRPEKEGRS) the composition is skewed to basic and acidic residues. Positions 241-263 (ESKEETEREGEEEEEEEEEEEED) are enriched in acidic residues. Residues 266 to 268 (RGD) carry the Cell attachment site motif. Residues 278–315 (PGTPRGRPRLPRSCSLSYRTISCVHADFTEIPPITAPE) form the LRRNT domain. LRR repeat units follow at residues 339–359 (NLERLDLSRNNITSSGIGPKA), 365–386 (KLMRLNMDGNNLVHIPSDLPST), 387–407 (LEELKINDNNLQAIDEKSLSD), 410–430 (QLVTLELEGNNLSEINVDPLA), 436–456 (SLSYLRLGRNKFRIIPQGLPA), 457–478 (STEELYLENNQIEEITEICFNH), 481–501 (KITMIILRYNKIEESRIAPLA), 507–528 (NLESIDLSYNKLYHVPSYLPKS), 529–549 (LLHLVLIGNQIDRIPGYVFGH), 553–573 (GLEYLYLSFNRLSDDGVDLVS), 580–601 (SLRELFLDHNDFKSIPPGIQDM), 603–624 (ALHFLRLNNNKIRNIHPEQICN), and 632–655 (ALEHLHLENNYIRTREISSYAFSC). N-linked (GlcNAc...) asparagine glycosylation is present at asparagine 349. Residue asparagine 420 is glycosylated (N-linked (GlcNAc...) asparagine). An N-linked (GlcNAc...) asparagine glycan is attached at asparagine 477.

It belongs to the small leucine-rich proteoglycan (SLRP) family. SLRP class I subfamily. Interacts with numerous extracellular matrix proteins. Interacts with isoform 1 of MSL1. Interacts with isoform 3 of RASSF1.

Its subcellular location is the secreted. It localises to the extracellular space. The protein localises to the extracellular matrix. Its function is as follows. Promotes matrix assembly and cell adhesiveness. This chain is Extracellular matrix protein 2 (Ecm2), found in Mus musculus (Mouse).